A 174-amino-acid polypeptide reads, in one-letter code: 3-hydroxydecanoyl-[acyl-carrier-protein] dehydratase (174 aa).

The active site involves His-73.

This sequence belongs to the thioester dehydratase family. FabA subfamily. Homodimer.

It localises to the cytoplasm. The enzyme catalyses a (3R)-hydroxyacyl-[ACP] = a (2E)-enoyl-[ACP] + H2O. It catalyses the reaction (3R)-hydroxydecanoyl-[ACP] = (2E)-decenoyl-[ACP] + H2O. The catalysed reaction is (2E)-decenoyl-[ACP] = (3Z)-decenoyl-[ACP]. Its pathway is lipid metabolism; fatty acid biosynthesis. Necessary for the introduction of cis unsaturation into fatty acids. Catalyzes the dehydration of (3R)-3-hydroxydecanoyl-ACP to E-(2)-decenoyl-ACP and then its isomerization to Z-(3)-decenoyl-ACP. Can catalyze the dehydratase reaction for beta-hydroxyacyl-ACPs with saturated chain lengths up to 16:0, being most active on intermediate chain length. The chain is 3-hydroxydecanoyl-[acyl-carrier-protein] dehydratase from Teredinibacter turnerae (strain ATCC 39867 / T7901).